An 876-amino-acid chain; its full sequence is Valine--tRNA ligase (876 aa).

The short motif at 44-54 (PNVTGKLHLGH) is the 'HIGH' region element. Positions 520–524 (KMSKS) match the 'KMSKS' region motif. Lysine 523 serves as a coordination point for ATP. Residues 805 to 876 (LEGLIDMDKE…VKARIEQLKA (72 aa)) are a coiled coil.

The protein belongs to the class-I aminoacyl-tRNA synthetase family. ValS type 1 subfamily. Monomer.

Its subcellular location is the cytoplasm. It catalyses the reaction tRNA(Val) + L-valine + ATP = L-valyl-tRNA(Val) + AMP + diphosphate. Functionally, catalyzes the attachment of valine to tRNA(Val). As ValRS can inadvertently accommodate and process structurally similar amino acids such as threonine, to avoid such errors, it has a 'posttransfer' editing activity that hydrolyzes mischarged Thr-tRNA(Val) in a tRNA-dependent manner. In Staphylococcus aureus (strain MRSA252), this protein is Valine--tRNA ligase.